The sequence spans 246 residues: MKLTPELLSRSSSSINTLRDRELDLRGLKIPAIENLGVTRDQNDAIDLTDNDIRYLGNFPLLQQLKTLQLANNLISRIDPRIGHSLPALHSLNLTNNCISDLSELVHLSKCRRLEYLCLMGTPASREAQYREFVIWKLPQVRVLDYQRIKDKERARAKDLMETEDGRPTALAANILKKLGASAMDVDVDVMVGKQKTFEPGRLNGSSRRLLTAEERKAIEDAIESSESLEEIRKLEEQLKMGHTFV.

LRR repeat units follow at residues 19-40 (RDRELDLRGLKIPAIENLGVTR), 42-63 (QNDAIDLTDNDIRYLGNFPLLQ), 64-85 (QLKTLQLANNLISRIDPRIGHS), and 88-109 (ALHSLNLTNNCISDLSELVHLS). Residues 122–160 (TPASREAQYREFVIWKLPQVRVLDYQRIKDKERARAKDL) form the LRRCT domain.

Belongs to the U2 small nuclear ribonucleoprotein A family. In terms of assembly, associated with the spliceosome.

It is found in the nucleus. In terms of biological role, involved in pre-mRNA splicing. The chain is U2 small nuclear ribonucleoprotein A' (LEA1) from Mycosarcoma maydis (Corn smut fungus).